A 232-amino-acid polypeptide reads, in one-letter code: 5'-methylthioadenosine/S-adenosylhomocysteine nucleosidase (232 aa).

Glutamate 12 functions as the Proton acceptor in the catalytic mechanism. Residues glycine 78, isoleucine 152, and 173–174 (ME) contribute to the substrate site. Aspartate 197 functions as the Proton donor in the catalytic mechanism.

This sequence belongs to the PNP/UDP phosphorylase family. MtnN subfamily. Homodimer.

It carries out the reaction S-adenosyl-L-homocysteine + H2O = S-(5-deoxy-D-ribos-5-yl)-L-homocysteine + adenine. The catalysed reaction is S-methyl-5'-thioadenosine + H2O = 5-(methylsulfanyl)-D-ribose + adenine. It catalyses the reaction 5'-deoxyadenosine + H2O = 5-deoxy-D-ribose + adenine. It functions in the pathway amino-acid biosynthesis; L-methionine biosynthesis via salvage pathway; S-methyl-5-thio-alpha-D-ribose 1-phosphate from S-methyl-5'-thioadenosine (hydrolase route): step 1/2. In terms of biological role, catalyzes the irreversible cleavage of the glycosidic bond in both 5'-methylthioadenosine (MTA) and S-adenosylhomocysteine (SAH/AdoHcy) to adenine and the corresponding thioribose, 5'-methylthioribose and S-ribosylhomocysteine, respectively. Also cleaves 5'-deoxyadenosine, a toxic by-product of radical S-adenosylmethionine (SAM) enzymes, into 5-deoxyribose and adenine. Thus, is required for in vivo function of the radical SAM enzymes biotin synthase and lipoic acid synthase, that are inhibited by 5'-deoxyadenosine accumulation. The sequence is that of 5'-methylthioadenosine/S-adenosylhomocysteine nucleosidase from Pectobacterium carotovorum subsp. carotovorum (strain PC1).